The chain runs to 87 residues: UPF0250 protein BUsg_472 (87 aa).

The protein belongs to the UPF0250 family.

This Buchnera aphidicola subsp. Schizaphis graminum (strain Sg) protein is UPF0250 protein BUsg_472.